The primary structure comprises 341 residues: Nicotinate-nucleotide--dimethylbenzimidazole phosphoribosyltransferase (341 aa).

E310 functions as the Proton acceptor in the catalytic mechanism.

The protein belongs to the CobT family.

It catalyses the reaction 5,6-dimethylbenzimidazole + nicotinate beta-D-ribonucleotide = alpha-ribazole 5'-phosphate + nicotinate + H(+). The protein operates within nucleoside biosynthesis; alpha-ribazole biosynthesis; alpha-ribazole from 5,6-dimethylbenzimidazole: step 1/2. Its function is as follows. Catalyzes the synthesis of alpha-ribazole-5'-phosphate from nicotinate mononucleotide (NAMN) and 5,6-dimethylbenzimidazole (DMB). In Vibrio cholerae serotype O1 (strain ATCC 39315 / El Tor Inaba N16961), this protein is Nicotinate-nucleotide--dimethylbenzimidazole phosphoribosyltransferase.